Reading from the N-terminus, the 38-residue chain is GIFSSRKCKTPSKTFKGYCTRDSNCDTSCRYEGYPAGD.

The protein belongs to the DEFL family. Group IV subfamily. As to expression, distributed in the epidermal cell layer of leaves and in the subepidermal layer region of stems. Not in roots.

The protein resides in the secreted. It is found in the cell wall. Functionally, antimicrobial peptide. Active against Fusarium spp., Gram-positive and Gram-negative bacterial pathogens. This Spinacia oleracea (Spinach) protein is Defensin D7.